A 199-amino-acid chain; its full sequence is V-type ATP synthase subunit E (199 aa).

This sequence belongs to the V-ATPase E subunit family.

In terms of biological role, produces ATP from ADP in the presence of a proton gradient across the membrane. This chain is V-type ATP synthase subunit E, found in Borrelia garinii subsp. bavariensis (strain ATCC BAA-2496 / DSM 23469 / PBi) (Borreliella bavariensis).